A 346-amino-acid chain; its full sequence is Dihydroorotase (346 aa).

Zn(2+) contacts are provided by His17 and His19. Residues 19–21 (HVR) and Asn45 each bind substrate. Zn(2+) contacts are provided by Lys102, His139, and His177. N6-carboxylysine is present on Lys102. Position 139 (His139) interacts with substrate. Leu222 is a substrate binding site. Asp250 is a binding site for Zn(2+). Asp250 is a catalytic residue. The substrate site is built by His254 and Ala266.

The protein belongs to the metallo-dependent hydrolases superfamily. DHOase family. Class II DHOase subfamily. Homodimer. Requires Zn(2+) as cofactor.

It catalyses the reaction (S)-dihydroorotate + H2O = N-carbamoyl-L-aspartate + H(+). It participates in pyrimidine metabolism; UMP biosynthesis via de novo pathway; (S)-dihydroorotate from bicarbonate: step 3/3. Its function is as follows. Catalyzes the reversible cyclization of carbamoyl aspartate to dihydroorotate. In Delftia acidovorans (strain DSM 14801 / SPH-1), this protein is Dihydroorotase.